Here is a 527-residue protein sequence, read N- to C-terminus: Organic cation/carnitine transporter 2 (527 aa).

Residues 1-27 (MAEPTQPLLTDSNSSSPRSLDDTIESY) are Cytoplasmic-facing. Residues 28 to 48 (IGSFGWAQFLQAALVSFSGVF) traverse the membrane as a helical segment. Residues 49 to 119 (DAQQTFISVF…SFVKGLPESS (71 aa)) lie on the Extracellular side of the membrane. Residues 120–140 (FFVGCLIGGLVLSTLADSSLG) form a helical membrane-spanning segment. Residues 141–149 (RKNMLFLSC) lie on the Cytoplasmic side of the membrane. The helical transmembrane segment at 150-170 (LVMAISTMLTVFSPNIWVYAV) threads the bilayer. Residues 171–176 (LRFVNG) lie on the Extracellular side of the membrane. Residues 177–195 (FGRATIGTCALVLSTELVG) form a helical membrane-spanning segment. 190–197 (STELVGKK) serves as a coordination point for ATP. Over 196–201 (KKWRGR) the chain is Cytoplasmic. The chain crosses the membrane as a helical span at residues 202 to 222 (VGIMSFFGFMLGFLSLPLMAY). At 223-230 (MNRGSSWR) the chain is on the extracellular side. Residues 231 to 251 (ILYAWTSIPTIIYCVLVRFFV) form a helical membrane-spanning segment. Over 252 to 326 (CESPRWLFVR…LVEKRWALKR (75 aa)) the chain is Cytoplasmic. The chain crosses the membrane as a helical span at residues 327–347 (LSAVMAIAFGIGLVYYGMPLA). The Extracellular segment spans residues 348–356 (LSNLDFNIY). The helical transmembrane segment at 357–377 (LSAAFNALMDLPANLITLFLV) threads the bilayer. The Cytoplasmic segment spans residues 378–385 (DKLSRRNA). A helical membrane pass occupies residues 386–406 (LIGFTALGGVSSVLIFALHNM). Residues 407–415 (RIGNHGALQ) lie on the Extracellular side of the membrane. The helical transmembrane segment at 416–436 (LALELISYFSACSAFNMEMIY) threads the bilayer. Residues 437 to 448 (TIELFPTCVRNS) are Cytoplasmic-facing. The chain crosses the membrane as a helical span at residues 449–469 (AIAMARQALVLGGVFSPIMVA). Over 470–475 (AGRKNA) the chain is Extracellular. Residues 476–496 (FWSFGLFGLAIGLLGLFAVGL) traverse the membrane as a helical segment. The Cytoplasmic segment spans residues 497 to 527 (PETRGSDLCDTMDEEECKDRRSKVAVNNVIA).

This sequence belongs to the major facilitator (TC 2.A.1) superfamily. Organic cation transporter (TC 2.A.1.19) family. As to expression, weakly expressed in roots, including tips and initiation site of lateral roots, siliques and flowers, especially in pollen and stigma.

It localises to the vacuole membrane. Its function is as follows. High affinity carnitine transporter involved in the active cellular uptake of carnitine. Also transports organic cations. The sequence is that of Organic cation/carnitine transporter 2 (OCT2) from Arabidopsis thaliana (Mouse-ear cress).